Reading from the N-terminus, the 187-residue chain is UPF0340 protein SPG_0604 (187 aa).

This sequence belongs to the UPF0340 family.

The sequence is that of UPF0340 protein SPG_0604 from Streptococcus pneumoniae serotype 19F (strain G54).